The sequence spans 21 residues: Maculatin-1.1 (21 aa).

Residue phenylalanine 21 is modified to Phenylalanine amide.

In terms of tissue distribution, expressed by the skin dorsal glands.

The protein localises to the secreted. In terms of biological role, maculatin-1.1 shows significant antibacterial activity against Gram-positive bacteria, less against Gram-negative bacteria. Maculatin-1.1.1 is inactive. The sequence is that of Maculatin-1.1 from Ranoidea genimaculata (Brown-spotted tree frog).